The primary structure comprises 1591 residues: Rho guanine nucleotide exchange factor TIAM1 (1591 aa).

A disordered region spans residues 1–78 (MGNAESQHVE…AENGLEPFSQ (78 aa)). A lipid anchor (N-myristoyl glycine) is attached at Gly-2. A compositionally biased stretch (basic and acidic residues) spans 7–19 (QHVEHEFYGEKHA). Positions 20-49 (SLGRKHTSRSLRLSHKTRRTRHASSGKVIH) are enriched in basic residues. Over residues 53-67 (EVSTRSSSTPSIPQS) the composition is skewed to low complexity. Ser-231 bears the Phosphoserine mark. Disordered regions lie at residues 298 to 379 (SEGA…GDAA) and 393 to 422 (MSTT…SPGQ). Composition is skewed to polar residues over residues 300 to 313 (GATN…NSMQ) and 340 to 361 (TTDT…SPTT). Phosphoserine is present on residues Ser-356 and Ser-358. Over residues 367-377 (GSDSGSSSTGD) the composition is skewed to low complexity. Over residues 412–422 (QSSGTLSSPGQ) the composition is skewed to polar residues. The region spanning 434 to 549 (VRKAGALAVK…TAIHSACATA (116 aa)) is the PH 1 domain. Phosphoserine is present on Ser-695. The RBD domain maps to 765-832 (TPSWFCLPNN…QPEEDIYELL (68 aa)). Tyr-829 is subject to Phosphotyrosine; by NTRK2. Residues 845–908 (SIHIEKSDTA…NNRAADALNS (64 aa)) enclose the PDZ domain. The segment at 939–1034 (SPPHRVDGPA…TGPQLATMRQ (96 aa)) is disordered. Over residues 958–975 (LTSNPGHSLCSEQGSSAE) the composition is skewed to polar residues. Positions 977 to 990 (APEETEGPDLESSD) are enriched in acidic residues. Residues 1014-1024 (PSDQSPSPQDS) show a composition bias toward low complexity. Polar residues predominate over residues 1025–1034 (TGPQLATMRQ). In terms of domain architecture, DH spans 1040-1234 (KLRKVICELL…NKVASHINEM (195 aa)). In terms of domain architecture, PH 2 spans 1261–1397 (DLSMGDLLLH…KAVHSILRDK (137 aa)). Tyr-1323 is subject to Phosphotyrosine. Glycyl lysine isopeptide (Lys-Gly) (interchain with G-Cter in ubiquitin) cross-links involve residues Lys-1404 and Lys-1420. Residues 1456–1482 (TIDSDAVSASSPEKESQQPPGGGDTDR) are disordered. The residue at position 1519 (Ser-1519) is a Phosphoserine.

It belongs to the TIAM family. Component of the Par polarity complex, composed of at least phosphorylated PRKCZ, PARD3 and TIAM1. Interacts with NTRK2; mediates the activation of RAC1 by BDNF. Interacts with MAPK8IP2 and CD44. Interacts with BAIAP2. Interacts with EPHA8; regulates clathrin-mediated endocytosis of EPHA8. Interacts with PARD3. Interacts (via PDZ domain) with CNTNAP4, SDC1 and SDC3 (via C-terminus). In terms of processing, ubiquitinated. Undergoes 'Lys-48' ubiquitination at Lys-1404 and Lys-1420 by a CUL3(KBTBD6/7) E3 ubiquitin ligase complex composed of CUL3, RBX1, KBTBD6 and KBTBD7. 'Lys-48' ubiquitination at Lys-1404 and Lys-1420 triggers proteasomal degradation. Ubiquitination at Lys-1404 and Lys-1420 by CUL3(KBTBD6/7) also requires the membrane-associated protein GABARAP and may therefore be spatially restricted within the cell. In terms of tissue distribution, found in virtually all analyzed tumor cell lines including B- and T-lymphomas, neuroblastomas, melanomas and carcinomas.

It is found in the cell junction. It localises to the cell membrane. In terms of biological role, guanyl-nucleotide exchange factor that activates RHO-like proteins and connects extracellular signals to cytoskeletal activities. Activates RAC1, CDC42, and to a lesser extent RHOA and their downstream signaling to regulate processes like cell adhesion and cell migration. The sequence is that of Rho guanine nucleotide exchange factor TIAM1 from Homo sapiens (Human).